Here is a 532-residue protein sequence, read N- to C-terminus: Nucleobase-ascorbate transporter 6 (532 aa).

The segment at 1-24 (MAGGGAPAPKADEPQPHPPKDQLP) is disordered. Over residues 10–20 (KADEPQPHPPK) the composition is skewed to basic and acidic residues. 12 helical membrane-spanning segments follow: residues 39–59 (AILLGFQHYLVMLGTTVLIPT), 75–95 (VIQTILFVAGINTLLQTLFGT), 97–117 (LPAVVGASYTFVPTTISIILS), 137–157 (TQGALIVASTLQMILGFSGLW), 163–185 (FLSPISAVPLVGLVGFGLYEFGF), 192–212 (IEIGLPELLILVFVSQYLPHV), 223–243 (FAVIFAVVIVWIYAHLLTVGG), 289–309 (FAMMMASFVALVESTGAFVAV), 361–381 (VGSRRVVQIAAGFMIFFSILG), 392–414 (APIIAALYCLFFAYVGAGGLSFL), 426–446 (FILGFSVFLGLSIPQYFNEYT), and 463–483 (DMVNVPFSSEPFVAGSVAFFL).

It belongs to the nucleobase:cation symporter-2 (NCS2) (TC 2.A.40) family. As to expression, expressed in the apical region of cotyledons 4 days after imbibition (DAI). Expressed in the whole vasculature at 12 DAI. Expressed in the root central cylinder and lateral root primordia. Expressed in the vasculature of sepals, filaments, carpels and developing siliques.

The protein localises to the membrane. This Arabidopsis thaliana (Mouse-ear cress) protein is Nucleobase-ascorbate transporter 6 (NAT6).